The following is a 345-amino-acid chain: Uroporphyrinogen decarboxylase (345 aa).

Substrate is bound by residues 27–31 (RQAGR), F46, D76, Y152, S207, and H321.

It belongs to the uroporphyrinogen decarboxylase family. Homodimer.

The protein resides in the cytoplasm. The enzyme catalyses uroporphyrinogen III + 4 H(+) = coproporphyrinogen III + 4 CO2. The protein operates within porphyrin-containing compound metabolism; protoporphyrin-IX biosynthesis; coproporphyrinogen-III from 5-aminolevulinate: step 4/4. Its function is as follows. Catalyzes the decarboxylation of four acetate groups of uroporphyrinogen-III to yield coproporphyrinogen-III. This is Uroporphyrinogen decarboxylase from Staphylococcus aureus (strain USA300 / TCH1516).